A 132-amino-acid chain; its full sequence is Large ribosomal subunit protein uL14 (132 aa).

It belongs to the universal ribosomal protein uL14 family. In terms of assembly, part of the 50S ribosomal subunit. Forms a cluster with proteins L3 and L24e, part of which may contact the 16S rRNA in 2 intersubunit bridges.

Its function is as follows. Binds to 23S rRNA. Forms part of two intersubunit bridges in the 70S ribosome. In Methanococcus maripaludis (strain C7 / ATCC BAA-1331), this protein is Large ribosomal subunit protein uL14.